Consider the following 100-residue polypeptide: Large ribosomal subunit protein uL23 (100 aa).

This sequence belongs to the universal ribosomal protein uL23 family. As to quaternary structure, part of the 50S ribosomal subunit. Contacts protein L29, and trigger factor when it is bound to the ribosome.

In terms of biological role, one of the early assembly proteins it binds 23S rRNA. One of the proteins that surrounds the polypeptide exit tunnel on the outside of the ribosome. Forms the main docking site for trigger factor binding to the ribosome. The sequence is that of Large ribosomal subunit protein uL23 from Aeromonas salmonicida (strain A449).